We begin with the raw amino-acid sequence, 504 residues long: Tachykinin-like peptides receptor 86C (504 aa).

Residues methionine 1–threonine 84 lie on the Extracellular side of the membrane. 3 N-linked (GlcNAc...) asparagine glycosylation sites follow: asparagine 12, asparagine 28, and asparagine 36. The helical transmembrane segment at isoleucine 85–valine 108 threads the bilayer. The Cytoplasmic segment spans residues threonine 109–threonine 118. A helical transmembrane segment spans residues asparagine 119–phenylalanine 143. The Extracellular portion of the chain corresponds to methionine 144 to tyrosine 155. Residues cysteine 156–phenylalanine 179 traverse the membrane as a helical segment. Residues aspartate 180 to arginine 199 are Cytoplasmic-facing. Residues isoleucine 200–threonine 224 traverse the membrane as a helical segment. The Extracellular segment spans residues lysine 225–alanine 250. Residues aspartate 251 to serine 275 traverse the membrane as a helical segment. Residues leucine 276–phenylalanine 308 are Cytoplasmic-facing. A helical transmembrane segment spans residues isoleucine 309–tyrosine 330. Residues histidine 331–histidine 343 lie on the Extracellular side of the membrane. The helical transmembrane segment at methionine 344 to asparagine 367 threads the bilayer. Residues lysine 368–methionine 504 lie on the Cytoplasmic side of the membrane. The tract at residues proline 393–asparagine 450 is disordered. Composition is skewed to polar residues over residues serine 395–asparagine 404 and lysine 416–asparagine 450.

The protein belongs to the G-protein coupled receptor 1 family. In terms of tissue distribution, expressed in central nervous system, as well as in subsets of neurons in each segment of the developing ventral ganglia.

Its subcellular location is the cell membrane. Functionally, receptor for tachykinin-like peptides. The protein is Tachykinin-like peptides receptor 86C (TkR86C) of Drosophila melanogaster (Fruit fly).